A 300-amino-acid chain; its full sequence is (R)-3-hydroxydecanoyl-ACP:CoA transacylase (300 aa).

Positions 29-253 constitute an AB hydrolase-1 domain; that stretch reads TIILVNGSLS…HTIRNAGHFI (225 aa).

It participates in polyester biosynthesis; polyhydroxyalkanoate biosynthesis. Its function is as follows. Catalyzes the transfer of the acyl moiety from in vitro synthesized 3-hydroxydecanoyl-CoA to acyl carrier protein. This Pseudomonas aeruginosa (strain ATCC 15692 / DSM 22644 / CIP 104116 / JCM 14847 / LMG 12228 / 1C / PRS 101 / PAO1) protein is (R)-3-hydroxydecanoyl-ACP:CoA transacylase (phaG).